The chain runs to 494 residues: Glycerol kinase (494 aa).

An ADP-binding site is contributed by Thr13. Positions 13, 14, and 15 each coordinate ATP. Thr13 serves as a coordination point for sn-glycerol 3-phosphate. ADP is bound at residue Arg17. Sn-glycerol 3-phosphate is bound by residues Arg83, Glu84, Tyr135, and Asp244. 5 residues coordinate glycerol: Arg83, Glu84, Tyr135, Asp244, and Gln245. ADP contacts are provided by Thr266 and Gly309. Residues Thr266, Gly309, Gln313, and Gly410 each contribute to the ATP site. Gly410 and Asn414 together coordinate ADP.

This sequence belongs to the FGGY kinase family.

The enzyme catalyses glycerol + ATP = sn-glycerol 3-phosphate + ADP + H(+). It participates in polyol metabolism; glycerol degradation via glycerol kinase pathway; sn-glycerol 3-phosphate from glycerol: step 1/1. With respect to regulation, inhibited by fructose 1,6-bisphosphate (FBP). Key enzyme in the regulation of glycerol uptake and metabolism. Catalyzes the phosphorylation of glycerol to yield sn-glycerol 3-phosphate. This is Glycerol kinase from Shewanella sp. (strain MR-7).